We begin with the raw amino-acid sequence, 281 residues long: Short neuropeptide F (281 aa).

The N-terminal stretch at 1–30 is a signal peptide; sequence MFHLKRELSQGCALALICLVSLQMQQPAQA. Positions 31-64 are excised as a propeptide; the sequence is EVSSAQGTPLSNLYDNLLQREYAGPVVFPNHQVE. 2 positions are modified to phenylalanine amide: Phe-77 and Phe-111. Residues 115–165 constitute a propeptide that is removed on maturation; it reads DPSLPQMRRTAYDDLLERELTLNSQQQQQQLGTEPDSDLGADYDGLYERVV. The interval 137–156 is disordered; the sequence is NSQQQQQQLGTEPDSDLGAD. Trp-173 carries the post-translational modification Tryptophan amide. Positions 176 to 246 are excised as a propeptide; sequence SVPQFEANNA…NDTSEFQREV (71 aa). Residues 226 to 281 are disordered; it reads ANDEDTDTDLNNDTSEFQREVRKPMRLRWGRSTGKAPSEQKHTPEETSSIPPKTQN. Position 254 is a tryptophan amide (Trp-254). The propeptide occupies 257–281; that stretch reads STGKAPSEQKHTPEETSSIPPKTQN. Positions 271–281 are enriched in polar residues; sequence ETSSIPPKTQN.

Belongs to the NPY family. In terms of tissue distribution, stage 17 embryos show expression in the two brain hemispheres (neural cells located in the dorsal posterior region), the connected ventral ganglion (pairs of neural cells along the ventral midline) and the peripheral nervous system (expressed in the antennal-maxillary sensory cells). In the brain hemispheres of the feeding third instar larva, expression in neural cells is located in the dorsal-anterior region of the protocerebrum. In the larval ventral ganglion, expression is seen in the neural cells located in the subesophagial region, along the ventral midline and in thoracic and abdominal segments. In the adult brain, expression is seen in the medulla and the mushroom body calyx (at protein level).

The protein localises to the secreted. Functionally, plays a role in controlling food intake and regulating body size. The protein is Short neuropeptide F (sNPF) of Drosophila melanogaster (Fruit fly).